Here is a 113-residue protein sequence, read N- to C-terminus: Protein crumbs homolog 3 (113 aa).

Residues 1–24 (MATPGLGVLLAFGLPMLPSGWSLT) form the signal peptide. Positions 23 to 44 (LTAPDPFTNSTTQPPGDESNGG) are disordered. The Extracellular segment spans residues 25 to 49 (APDPFTNSTTQPPGDESNGGLSSGA). Asparagine 31 carries an N-linked (GlcNAc...) asparagine glycan. The helical transmembrane segment at 50-70 (IVAITVVFSILGVLLIAVGLF) threads the bilayer. Topologically, residues 71–113 (LLMRKLREKRQTEGTYRPSSEEQVGARAPPPPNLKLPPEERLI) are cytoplasmic. An interaction with EPB41L5 region spans residues 77–113 (REKRQTEGTYRPSSEEQVGARAPPPPNLKLPPEERLI). The disordered stretch occupies residues 80 to 113 (RQTEGTYRPSSEEQVGARAPPPPNLKLPPEERLI). A compositionally biased stretch (polar residues) spans 83 to 92 (EGTYRPSSEE). The short motif at 110-113 (ERLI) is the PDZ-binding element.

As to quaternary structure, component of a complex composed of CRB3, PALS1 and PATJ. Interacts (via C-terminus) with PALS1 (via PDZ domain). Interacts with PARD6A. Interacts (via intracellular domain) with EPB41L5. Interacts with WDR83. As to expression, expressed in the apical renal tubules (at protein level). Expressed in the retinal pigment epithelium.

The protein localises to the apical cell membrane. It localises to the cell junction. It is found in the tight junction. In terms of biological role, involved in the establishment of cell polarity in mammalian epithelial cells. Regulates the morphogenesis of tight junctions. Involved in promoting phosphorylation and cytoplasmic retention of transcriptional coactivators YAP1 and WWTR1/TAZ which leads to suppression of TGFB1-dependent transcription of target genes such as CCN2/CTGF, SERPINE1/PAI1, SNAI1/SNAIL1 and SMAD7. The polypeptide is Protein crumbs homolog 3 (Crb3) (Mus musculus (Mouse)).